The sequence spans 626 residues: Elongation factor 4 (626 aa).

Positions 14–195 (SVIRNFCIIA…QIVMDVPAPH (182 aa)) constitute a tr-type G domain. Residues 26 to 31 (DHGKST) and 142 to 145 (NKID) each bind GTP. Residues 603 to 626 (LSTGEDSNDRDTKDKIRAAQKTEG) form a disordered region. Residues 609-626 (SNDRDTKDKIRAAQKTEG) are compositionally biased toward basic and acidic residues.

Belongs to the TRAFAC class translation factor GTPase superfamily. Classic translation factor GTPase family. LepA subfamily.

The protein localises to the cell membrane. It carries out the reaction GTP + H2O = GDP + phosphate + H(+). Required for accurate and efficient protein synthesis under certain stress conditions. May act as a fidelity factor of the translation reaction, by catalyzing a one-codon backward translocation of tRNAs on improperly translocated ribosomes. Back-translocation proceeds from a post-translocation (POST) complex to a pre-translocation (PRE) complex, thus giving elongation factor G a second chance to translocate the tRNAs correctly. Binds to ribosomes in a GTP-dependent manner. This Bifidobacterium longum (strain DJO10A) protein is Elongation factor 4.